Consider the following 146-residue polypeptide: Nuclear export protein (146 aa).

In terms of assembly, interacts with host HSC70.

It is found in the host cytoplasm. In terms of biological role, may mediate the nuclear export of encapsidated genomic RNAs (ribonucleoproteins, RNPs). Interaction of viral NEP with M1-Hsc70 is thought to promote nuclear export of the viral encapsidated genomes. This chain is Nuclear export protein, found in Infectious salmon anemia virus (isolate Atlantic salmon/Norway/810/9/99) (ISAV).